A 333-amino-acid chain; its full sequence is tRNA N6-adenosine threonylcarbamoyltransferase (333 aa).

Residues His-111 and His-115 each contribute to the Fe cation site. Residues 134–138 (LVSGG), Asp-167, Gly-180, and Asn-272 each bind substrate. Asp-300 contributes to the Fe cation binding site.

It belongs to the KAE1 / TsaD family. The cofactor is Fe(2+).

It localises to the cytoplasm. The catalysed reaction is L-threonylcarbamoyladenylate + adenosine(37) in tRNA = N(6)-L-threonylcarbamoyladenosine(37) in tRNA + AMP + H(+). Required for the formation of a threonylcarbamoyl group on adenosine at position 37 (t(6)A37) in tRNAs that read codons beginning with adenine. Is involved in the transfer of the threonylcarbamoyl moiety of threonylcarbamoyl-AMP (TC-AMP) to the N6 group of A37, together with TsaE and TsaB. TsaD likely plays a direct catalytic role in this reaction. The polypeptide is tRNA N6-adenosine threonylcarbamoyltransferase (Legionella pneumophila (strain Corby)).